The sequence spans 204 residues: Small ribosomal subunit protein uS7 (204 aa).

Met-1 is subject to N-acetylmethionine. N-acetylthreonine; in 40S ribosomal protein S5, N-terminally processed is present on Thr-2. At Thr-14 the chain carries Phosphothreonine. Lys-47 is modified (N6-acetyllysine; alternate). Residue Lys-47 forms a Glycyl lysine isopeptide (Lys-Gly) (interchain with G-Cter in SUMO2); alternate linkage. A Phosphoserine modification is found at Ser-142.

Belongs to the universal ribosomal protein uS7 family. In terms of assembly, component of the small ribosomal subunit. Part of the small subunit (SSU) processome, composed of more than 70 proteins and the RNA chaperone small nucleolar RNA (snoRNA) U3.

Its subcellular location is the cytoplasm. It localises to the nucleus. The protein localises to the nucleolus. Its function is as follows. Component of the small ribosomal subunit. The ribosome is a large ribonucleoprotein complex responsible for the synthesis of proteins in the cell. Part of the small subunit (SSU) processome, first precursor of the small eukaryotic ribosomal subunit. During the assembly of the SSU processome in the nucleolus, many ribosome biogenesis factors, an RNA chaperone and ribosomal proteins associate with the nascent pre-rRNA and work in concert to generate RNA folding, modifications, rearrangements and cleavage as well as targeted degradation of pre-ribosomal RNA by the RNA exosome. In Bos taurus (Bovine), this protein is Small ribosomal subunit protein uS7 (RPS5).